Consider the following 215-residue polypeptide: Ribonuclease T (215 aa).

The region spanning 21-195 (VVIDVETAGF…YDSKKTAELF (175 aa)) is the Exonuclease domain. Asp24, Glu26, His182, and Asp187 together coordinate Mg(2+). His182 functions as the Proton donor/acceptor in the catalytic mechanism.

It belongs to the RNase T family. As to quaternary structure, homodimer. Mg(2+) serves as cofactor.

In terms of biological role, trims short 3' overhangs of a variety of RNA species, leaving a one or two nucleotide 3' overhang. Responsible for the end-turnover of tRNA: specifically removes the terminal AMP residue from uncharged tRNA (tRNA-C-C-A). Also appears to be involved in tRNA biosynthesis. The sequence is that of Ribonuclease T from Wigglesworthia glossinidia brevipalpis.